Here is a 186-residue protein sequence, read N- to C-terminus: Large ribosomal subunit protein uL22 (186 aa).

This sequence belongs to the universal ribosomal protein uL22 family. As to quaternary structure, component of the large ribosomal subunit (LSU). Mature N.crassa ribosomes consist of a small (40S) and a large (60S) subunit. The 40S small subunit contains 1 molecule of ribosomal RNA (18S rRNA) and at least 32 different proteins. The large 60S subunit contains 3 rRNA molecules (26S, 5.8S and 5S rRNA) and at least 42 different proteins.

Its subcellular location is the cytoplasm. Component of the ribosome, a large ribonucleoprotein complex responsible for the synthesis of proteins in the cell. The small ribosomal subunit (SSU) binds messenger RNAs (mRNAs) and translates the encoded message by selecting cognate aminoacyl-transfer RNA (tRNA) molecules. The large subunit (LSU) contains the ribosomal catalytic site termed the peptidyl transferase center (PTC), which catalyzes the formation of peptide bonds, thereby polymerizing the amino acids delivered by tRNAs into a polypeptide chain. The nascent polypeptides leave the ribosome through a tunnel in the LSU and interact with protein factors that function in enzymatic processing, targeting, and the membrane insertion of nascent chains at the exit of the ribosomal tunnel. The sequence is that of Large ribosomal subunit protein uL22 (rpl-17) from Neurospora crassa (strain ATCC 24698 / 74-OR23-1A / CBS 708.71 / DSM 1257 / FGSC 987).